We begin with the raw amino-acid sequence, 446 residues long: tRNA-2-methylthio-N(6)-dimethylallyladenosine synthase (446 aa).

The MTTase N-terminal domain maps to 2–119; it reads KKIYIKTFGC…LPELIAQRRE (118 aa). Residues C11, C48, C82, C156, C160, and C163 each coordinate [4Fe-4S] cluster. The region spanning 142–376 is the Radical SAM core domain; that stretch reads RVEGGAAFVS…RIEAQAQGVN (235 aa). Positions 377-440 constitute a TRAM domain; it reads RSMVGSVQRV…PHSLRGEAVT (64 aa).

Belongs to the methylthiotransferase family. MiaB subfamily. Monomer. It depends on [4Fe-4S] cluster as a cofactor.

It localises to the cytoplasm. It catalyses the reaction N(6)-dimethylallyladenosine(37) in tRNA + (sulfur carrier)-SH + AH2 + 2 S-adenosyl-L-methionine = 2-methylsulfanyl-N(6)-dimethylallyladenosine(37) in tRNA + (sulfur carrier)-H + 5'-deoxyadenosine + L-methionine + A + S-adenosyl-L-homocysteine + 2 H(+). In terms of biological role, catalyzes the methylthiolation of N6-(dimethylallyl)adenosine (i(6)A), leading to the formation of 2-methylthio-N6-(dimethylallyl)adenosine (ms(2)i(6)A) at position 37 in tRNAs that read codons beginning with uridine. The polypeptide is tRNA-2-methylthio-N(6)-dimethylallyladenosine synthase (Thiobacillus denitrificans (strain ATCC 25259 / T1)).